The following is a 430-amino-acid chain: Probable transporter SCO4007 (430 aa).

Residues 1–17 are compositionally biased toward low complexity; it reads MPSSPSSTTPAPTSTPA. The interval 1–26 is disordered; it reads MPSSPSSTTPAPTSTPAARREPSGKG. Helical transmembrane passes span 34-54, 70-90, 101-121, 126-146, 159-179, 188-208, 244-264, 275-295, 315-335, 362-382, and 383-403; these read LFLPLIALCTAVTAANIYLAA, AVAWLASVAQLGYAAGLLFFA, LVAALSLVATAALLTAAASAG, AGAVLVASAATVVPQLLVPLV, VAAVIAGLFTGVVAARVLGGL, AVFVGAAVLTAVLGLATAYIL, AGMYGAWSALWTSLALLLTEG, GLFGLFGLAASVVAPLAGGLV, VPLFWLGGQVMAALCAAAVLV, TAYVVAGFAGGALASALAGPA, and FGHWGWGGVCAVAGAWLVLGW.

It belongs to the major facilitator superfamily.

Its subcellular location is the cell membrane. The protein is Probable transporter SCO4007 of Streptomyces coelicolor (strain ATCC BAA-471 / A3(2) / M145).